We begin with the raw amino-acid sequence, 491 residues long: Chromosomal replication initiator protein DnaA (491 aa).

The interval 1–68 is domain I, interacts with DnaA modulators; it reads MTSIWGQIQH…RTAACGVIGD (68 aa). The tract at residues 68–146 is domain II; it reads DTVEVVVTAG…PLDWAPVPQS (79 aa). The domain III, AAA+ region stretch occupies residues 147 to 364; sequence RTNWRFSFDD…SCLHNLILKA (218 aa). Residues G190, G192, K193, and T194 each coordinate ATP. Positions 365 to 491 are domain IV, binds dsDNA; sequence KLLNRQISLE…RNGRITHARH (127 aa).

The protein belongs to the DnaA family. As to quaternary structure, oligomerizes as a right-handed, spiral filament on DNA at oriC.

It is found in the cytoplasm. Its function is as follows. Plays an essential role in the initiation and regulation of chromosomal replication. ATP-DnaA binds to the origin of replication (oriC) to initiate formation of the DNA replication initiation complex once per cell cycle. Binds the DnaA box (a 9 base pair repeat at the origin) and separates the double-stranded (ds)DNA. Forms a right-handed helical filament on oriC DNA; dsDNA binds to the exterior of the filament while single-stranded (ss)DNA is stabiized in the filament's interior. The ATP-DnaA-oriC complex binds and stabilizes one strand of the AT-rich DNA unwinding element (DUE), permitting loading of DNA polymerase. After initiation quickly degrades to an ADP-DnaA complex that is not apt for DNA replication. Binds acidic phospholipids. This chain is Chromosomal replication initiator protein DnaA, found in Nitratidesulfovibrio vulgaris (strain ATCC 29579 / DSM 644 / CCUG 34227 / NCIMB 8303 / VKM B-1760 / Hildenborough) (Desulfovibrio vulgaris).